Consider the following 27-residue polypeptide: Endoglucanase gh5 (27 aa).

Catalysis depends on E6, which acts as the Nucleophile.

The catalysed reaction is Endohydrolysis of (1-&gt;4)-beta-D-glucosidic linkages in cellulose, lichenin and cereal beta-D-glucans.. Its activity is regulated as follows. Activity is stimulated by zinc ions, potassium ions and DTT. Activity is inhibited by manganese and chloride ions. Its function is as follows. Endoglucanase (EG) that cleaves the internal beta-1,4-glucosidic bonds in cellulose. This is Endoglucanase gh5 from Fomes meliae (Fomitopsis meliae).